The sequence spans 454 residues: Growth/differentiation factor 6 (454 aa).

The signal sequence occupies residues 1–22 (MDTPRVLLWAIFLISFLWDLPG). Residues 23–334 (FQQASISSSS…LPSPGRRRRR (312 aa)) constitute a propeptide that is removed on maturation. Residues 28-93 (ISSSSSSSTE…QGQEPPGRGL (66 aa)) are disordered. 2 stretches are compositionally biased toward basic and acidic residues: residues 39–52 (DSTK…EGKM) and 60–73 (AEGR…LRQK). Over residues 81–92 (GQHQGQEPPGRG) the composition is skewed to low complexity. Asparagine 117 carries an N-linked (GlcNAc...) asparagine glycan. Disordered stretches follow at residues 247–268 (DTGA…SLGF) and 303–350 (AEAA…KKSR). Residues 303–319 (AEAAGAEGSWPAPSGSP) show a composition bias toward low complexity. Positions 329-350 (GRRRRRTAFASRHGKRHGKKSR) are enriched in basic residues. 3 disulfides stabilise this stretch: cysteine 353-cysteine 419, cysteine 382-cysteine 451, and cysteine 386-cysteine 453.

The protein belongs to the TGF-beta family. As to quaternary structure, homodimer; disulfide-linked. Expressed in different subsets of developing joints. Highly expressed in the cochlea.

It is found in the secreted. Functionally, growth factor that controls proliferation and cellular differentiation in the retina and bone formation. Plays a key role in regulating apoptosis during retinal development. Establishes dorsal-ventral positional information in the retina and controls the formation of the retinotectal map. Required for normal formation of bones and joints in the limbs, skull, digits and axial skeleton. Plays a key role in establishing boundaries between skeletal elements during development. Regulation of GDF6 expression seems to be a mechanism for evolving species-specific changes in skeletal structures. Seems to positively regulate differentiation of chondrogenic tissue through the growth factor receptors subunits BMPR1A, BMPR1B, BMPR2 and ACVR2A, leading to the activation of SMAD1-SMAD5-SMAD8 complex. The regulation of chondrogenic differentiation is inhibited by NOG. Also involved in the induction of adipogenesis from mesenchymal stem cells. This mechanism acts through the growth factor receptors subunits BMPR1A, BMPR2 and ACVR2A and the activation of SMAD1-SMAD5-SMAD8 complex and MAPK14/p38. The protein is Growth/differentiation factor 6 (Gdf6) of Mus musculus (Mouse).